The primary structure comprises 556 residues: WD repeat-containing protein srw1 (556 aa).

Residues 1 to 80 form a disordered region; sequence MDEFDGFTRP…NEGDRFIPSR (80 aa). Residues 12–37 are compositionally biased toward low complexity; the sequence is SSNSSANRNSNNSMNRVENNNSNSDS. The segment covering 43 to 55 has biased composition (basic and acidic residues); that stretch reads SRGDAHTRMRQGF. Position 62 is a phosphoserine (S62). Residues 69-78 are compositionally biased toward basic and acidic residues; that stretch reads RTNEGDRFIP. Phosphothreonine is present on T98. The segment covering 126–146 has biased composition (polar residues); that stretch reads TFNNSPIATPNTTIGVSTPRT. Residues 126–173 form a disordered region; sequence TFNNSPIATPNTTIGVSTPRTDSGIDDIELTQRTPPSSSHTSSSILQN. A compositionally biased stretch (low complexity) spans 159 to 169; the sequence is TPPSSSHTSSS. T177 carries the phosphothreonine modification. Residues S187 and S214 each carry the phosphoserine modification. WD repeat units follow at residues 246-285, 289-328, 331-368, 372-411, 414-456, 458-499, and 502-541; these read GLAG…VTVM, YPTD…KTRT, GHTE…HYFR, AHRQ…PLYS, NHIA…MLHN, DTGS…RVGT, and GHTD…SKHS.

The protein belongs to the WD repeat CDC20/Fizzy family. Phosphorylated by cdc2-cdc13-CDK complex. This targets srw1 for proteolysis which in turn promotes cdc13 turnover. Dephosphorylated during G1 arrest.

It is found in the nucleus. Has a role in cell differentiation and cell cycling by negatively regulating cig2 and cdc12-associated cdc2. Down-regulates the level of cdc13, particularly in a nitrogen deprived environment. Regulator of cell cycle G1 phase progression. Prevents onset of mitosis during the pre-Start G1 period. Required for degradation of cdc13 mitotic cyclin B during G1 arrest but not during mitotic exit. The sequence is that of WD repeat-containing protein srw1 (srw1) from Schizosaccharomyces pombe (strain 972 / ATCC 24843) (Fission yeast).